A 462-amino-acid chain; its full sequence is G-patch domain and KOW motifs-containing protein homolog 1 (462 aa).

Disordered regions lie at residues 1 to 26 (MVEQ…KREE) and 182 to 218 (LKLP…EEEK). One can recognise a G-patch domain in the interval 154-202 (IESFGLAILRGCNWKDGDGIGKNPQKVALKLPNRRPPGLGLGATPKNPV). One can recognise a KOW 1 domain in the interval 221-248 (EIKVGSFIKVVDGRNKGVYGKVEGRDDD). Over residues 289 to 305 (EYDKEKDRLETERKKLE) the composition is skewed to basic and acidic residues. Residues 289–337 (EYDKEKDRLETERKKLESQPPSTSTSQSSKDYKSKSSSSKHDKNSSEYE) are disordered. The span at 306–317 (SQPPSTSTSQSS) shows a compositional bias: low complexity. Over residues 318-337 (KDYKSKSSSSKHDKNSSEYE) the composition is skewed to basic and acidic residues. The 28-residue stretch at 401 to 428 (PREIGEKLMIVAGKRSGQLAVMLDKDKR) folds into the KOW 2 domain.

Belongs to the MOS2 family.

It is found in the nucleus. This Caenorhabditis elegans protein is G-patch domain and KOW motifs-containing protein homolog 1.